The primary structure comprises 444 residues: Methylenetetrahydrofolate--tRNA-(uracil-5-)-methyltransferase TrmFO (444 aa).

Position 9–14 (9–14 (GAGMAG)) interacts with FAD.

The protein belongs to the MnmG family. TrmFO subfamily. Requires FAD as cofactor.

Its subcellular location is the cytoplasm. It carries out the reaction uridine(54) in tRNA + (6R)-5,10-methylene-5,6,7,8-tetrahydrofolate + NADH + H(+) = 5-methyluridine(54) in tRNA + (6S)-5,6,7,8-tetrahydrofolate + NAD(+). The catalysed reaction is uridine(54) in tRNA + (6R)-5,10-methylene-5,6,7,8-tetrahydrofolate + NADPH + H(+) = 5-methyluridine(54) in tRNA + (6S)-5,6,7,8-tetrahydrofolate + NADP(+). Functionally, catalyzes the folate-dependent formation of 5-methyl-uridine at position 54 (M-5-U54) in all tRNAs. This chain is Methylenetetrahydrofolate--tRNA-(uracil-5-)-methyltransferase TrmFO, found in Cereibacter sphaeroides (strain ATCC 17025 / ATH 2.4.3) (Rhodobacter sphaeroides).